We begin with the raw amino-acid sequence, 266 residues long: MKIGIFDSGLGGLSVLNEALKKLPNEEFLYYADRKNVPYGLKSKDEILKFSSHAVKFLIDQGANAIVIACNTATSAAINELRAKFDLPIIGMEPAVKKAADLNREGENSASLRTLVIATPLTVQGAKLKELIERVDSEHLVDVLALPRLVEFAENENFACDEVKEYLREEFAKFKLQNYCALVLGCTHFNYFKDSLREILPAGVSLIDGNEGTINKLISELSRLNLAHGKGQSVEYFYSDAKIYDNGELARIGRYLARLNKMLEIK.

Substrate-binding positions include 7–8 (DS) and 39–40 (YG). Residue cysteine 70 is the Proton donor/acceptor of the active site. 71 to 72 (NT) serves as a coordination point for substrate. Catalysis depends on cysteine 186, which acts as the Proton donor/acceptor. 187–188 (TH) contributes to the substrate binding site.

Belongs to the aspartate/glutamate racemases family.

It catalyses the reaction L-glutamate = D-glutamate. It functions in the pathway cell wall biogenesis; peptidoglycan biosynthesis. Its function is as follows. Provides the (R)-glutamate required for cell wall biosynthesis. This chain is Glutamate racemase, found in Campylobacter curvus (strain 525.92).